We begin with the raw amino-acid sequence, 842 residues long: Elongation factor 2 (842 aa).

A tr-type G domain is found at 17–253 (SNVRNMSVIA…LWGENYFNPK (237 aa)). GTP-binding positions include 26-33 (AHVDHGKS), 104-108 (DSPGH), and 158-161 (NKVD). Phosphoserine is present on serine 568. Threonine 574 is modified (phosphothreonine). Histidine 699 is modified (diphthamide).

The protein belongs to the TRAFAC class translation factor GTPase superfamily. Classic translation factor GTPase family. EF-G/EF-2 subfamily.

The protein resides in the cytoplasm. Functionally, catalyzes the GTP-dependent ribosomal translocation step during translation elongation. During this step, the ribosome changes from the pre-translocational (PRE) to the post-translocational (POST) state as the newly formed A-site-bound peptidyl-tRNA and P-site-bound deacylated tRNA move to the P and E sites, respectively. Catalyzes the coordinated movement of the two tRNA molecules, the mRNA and conformational changes in the ribosome. The polypeptide is Elongation factor 2 (eft201) (Schizosaccharomyces pombe (strain 972 / ATCC 24843) (Fission yeast)).